A 335-amino-acid chain; its full sequence is MTEPKDIVLKESEEIEGTPIEGPWLDEVRILEEVIDYYHRIGFQATHLGRAIEIWKKVEEKRASGEEVRVFLGYTSNIVSSGLRELIAWLVKEGKVDVIVTTAGGVEEDFIKALKPFILGDWYVNDAEMREKGINRIGNIFVPNDRYIEFEKYMIPFFERVLEMEKERGKPLTASEFIYEMGRFMDEKLGKEKERSIIYWAYKRNVPIFCPAITDGSIGDMLYFFKEERGDRELIIDVANDIVKLNNLAVTAKETASIILGGSLPKHAIINANLFRGGTDYAIYVTTAIPWDGSLSGAPPSEGVSWGKIRAKADYVEIWADATLVFPVLVWKVMR.

The Nucleophile role is filled by Lys-308.

This sequence belongs to the deoxyhypusine synthase family. NAD(+) is required as a cofactor.

It catalyses the reaction [eIF5A protein]-L-lysine + spermidine = [eIF5A protein]-deoxyhypusine + propane-1,3-diamine. It functions in the pathway protein modification; eIF5A hypusination. Its function is as follows. Catalyzes the NAD-dependent oxidative cleavage of spermidine and the subsequent transfer of the butylamine moiety of spermidine to the epsilon-amino group of a specific lysine residue of the eIF-5A precursor protein to form the intermediate deoxyhypusine residue. This chain is Probable deoxyhypusine synthase, found in Thermococcus onnurineus (strain NA1).